Consider the following 190-residue polypeptide: Protein GrpE (190 aa).

The segment at 1–33 is disordered; sequence MSEQEKDQNNAEPQVETVEEQQAAAAAEAVEPT. Residues 11-32 show a composition bias toward low complexity; the sequence is AEPQVETVEEQQAAAAAEAVEP.

The protein belongs to the GrpE family. Homodimer.

It is found in the cytoplasm. Participates actively in the response to hyperosmotic and heat shock by preventing the aggregation of stress-denatured proteins, in association with DnaK and GrpE. It is the nucleotide exchange factor for DnaK and may function as a thermosensor. Unfolded proteins bind initially to DnaJ; upon interaction with the DnaJ-bound protein, DnaK hydrolyzes its bound ATP, resulting in the formation of a stable complex. GrpE releases ADP from DnaK; ATP binding to DnaK triggers the release of the substrate protein, thus completing the reaction cycle. Several rounds of ATP-dependent interactions between DnaJ, DnaK and GrpE are required for fully efficient folding. The polypeptide is Protein GrpE (Alcanivorax borkumensis (strain ATCC 700651 / DSM 11573 / NCIMB 13689 / SK2)).